A 229-amino-acid chain; its full sequence is Ribonuclease 3 (229 aa).

Positions 4–133 constitute an RNase III domain; sequence WEELQESVGF…FIGALYLDNG (130 aa). A Mg(2+)-binding site is contributed by Glu46. Asp50 is an active-site residue. The Mg(2+) site is built by Asp119 and Glu122. The active site involves Glu122. The DRBM domain maps to 159–228; the sequence is DYKTQLQEIV…AQFAINQLTH (70 aa).

Belongs to the ribonuclease III family. In terms of assembly, homodimer. Mg(2+) serves as cofactor.

The protein localises to the cytoplasm. It carries out the reaction Endonucleolytic cleavage to 5'-phosphomonoester.. Functionally, digests double-stranded RNA. Involved in the processing of primary rRNA transcript to yield the immediate precursors to the large and small rRNAs (23S and 16S). Processes some mRNAs, and tRNAs when they are encoded in the rRNA operon. Processes pre-crRNA and tracrRNA of type II CRISPR loci if present in the organism. The protein is Ribonuclease 3 of Listeria welshimeri serovar 6b (strain ATCC 35897 / DSM 20650 / CCUG 15529 / CIP 8149 / NCTC 11857 / SLCC 5334 / V8).